We begin with the raw amino-acid sequence, 553 residues long: Putative transport protein YidE (553 aa).

The next 5 helical transmembrane spans lie at Ile4–Val24, Gly28–Ser48, Phe65–Ser85, Leu95–Phe115, and Met158–Leu178. RCK C-terminal domains are found at residues Gln191 to Gln276 and Asp279 to Asn361. Transmembrane regions (helical) follow at residues Met371–Val391, Gly393–Leu413, Ile439–Val459, Leu464–Leu484, Tyr493–Ala513, and Leu533–Gly553.

This sequence belongs to the AAE transporter (TC 2.A.81) family. YidE subfamily.

The protein resides in the cell membrane. This chain is Putative transport protein YidE, found in Escherichia coli O6:K15:H31 (strain 536 / UPEC).